The sequence spans 173 residues: Alpha-crystallin A chain (173 aa).

An N-acetylmethionine modification is found at Met-1. Positions 1–63 (MDIAIQHPWF…RTVLDSGISE (63 aa)) are required for complex formation with BFSP1 and BFSP2. Gln-6 carries the post-translational modification Deamidated glutamine; partial. Ser-45 carries the phosphoserine modification. Position 50 is a deamidated glutamine; partial (Gln-50). The region spanning 52–162 (LFRTVLDSGI…GHSERAIPVS (111 aa)) is the sHSP domain. Position 70 is an N6-acetyllysine (Lys-70). Gln-90 is modified (deamidated glutamine; partial). Lys-99 bears the N6-acetyllysine mark. Residue His-100 participates in Zn(2+) binding. Asn-101 bears the Deamidated asparagine; partial mark. Residues Glu-102 and His-107 each coordinate Zn(2+). Ser-122 bears the Phosphoserine mark. Asn-123 carries the post-translational modification Deamidated asparagine; partial. The segment at 144–173 (PKIPSGVDAGHSERAIPVSREEKPSSAPSS) is disordered. Residues 153-167 (GHSERAIPVSREEKP) show a composition bias toward basic and acidic residues. A Zn(2+)-binding site is contributed by His-154. The O-linked (GlcNAc) serine glycan is linked to Ser-162.

Belongs to the small heat shock protein (HSP20) family. Heteromer composed of three CRYAA and one CRYAB subunits. Inter-subunit bridging via zinc ions enhances stability, which is crucial as there is no protein turn over in the lens. Can also form homodimers and homotetramers (dimers of dimers) which serve as the building blocks of homooligomers. Within homooligomers, the zinc-binding motif is created from residues of 3 different molecules. His-100 and Glu-102 from one molecule are ligands of the zinc ion, and His-107 and His-154 residues from additional molecules complete the site with tetrahedral coordination geometry. Part of a complex required for lens intermediate filament formation composed of BFSP1, BFSP2 and CRYAA. Acetylation at Lys-70 may increase chaperone activity. In terms of processing, undergoes age-dependent proteolytical cleavage at the C-terminus.

The protein resides in the cytoplasm. It is found in the nucleus. In terms of biological role, contributes to the transparency and refractive index of the lens. Acts as a chaperone, preventing aggregation of various proteins under a wide range of stress conditions. Required for the correct formation of lens intermediate filaments as part of a complex composed of BFSP1, BFSP2 and CRYAA. In Giraffa camelopardalis (Giraffe), this protein is Alpha-crystallin A chain (CRYAA).